The following is a 107-amino-acid chain: UPF0235 protein RPC_0058 (107 aa).

The protein belongs to the UPF0235 family.

The chain is UPF0235 protein RPC_0058 from Rhodopseudomonas palustris (strain BisB18).